Here is a 548-residue protein sequence, read N- to C-terminus: MTKYVFVTGGVVSSLGKGIAAASLAAILESRGLQVTLLKLDPYINVDPGTMSPFQHGEVFVTEDGAETDLDLGHYERFISAKMHKVNNFTTGQIYESVLRKERRGDYLGKTVQVIPHITNEIQDFIARGADAAWNGATDVAIVEIGGTVGDIESLPFLEAARQMSLRLGRNNAAFVHLTLVPFIASAGELKTKPTQHSVQKLREIGIYPNLLLCRADRPIPDDERAKISMFSNVPLDAVISVWDADSIYKIPAMLHKQGVDNIVCEALGLTPPPADLSMWDNLVDALEHPTHQLTIGMVGKYVDLTESYKSLSEALVHAGIHTRSKINIEYIDSEDIETRGTDQLKHLDAILVPGGFGKRGTEGKIAAIRYARENGVPYLGICLGMQLAVIEFARHVAGLGGANSTEFDPSAPHPVVALITEWMDREGKVEKRDATSDLGGTMRKGAQRCPVKPGTRAQAIYGDDVNERHRHRYEVNNVYVPRLEEAGMVISARTPTENLPEMMELPDHPWFVGVQFHPEFTSTPRDGHPLFSSFIEAAIANHARKEA.

Residues 1–270 (MTKYVFVTGG…DNIVCEALGL (270 aa)) are amidoligase domain. Residue S13 participates in CTP binding. S13 lines the UTP pocket. ATP is bound by residues 14-19 (SLGKGI) and D71. Residues D71 and E144 each coordinate Mg(2+). CTP is bound by residues 151–153 (DIE), 191–196 (KTKPTQ), and K227. UTP-binding positions include 191–196 (KTKPTQ) and K227. A Glutamine amidotransferase type-1 domain is found at 295–545 (TIGMVGKYVD…IEAAIANHAR (251 aa)). Residue G356 participates in L-glutamine binding. C383 acts as the Nucleophile; for glutamine hydrolysis in catalysis. Residues 384-387 (LGMQ), E407, and R473 each bind L-glutamine. Catalysis depends on residues H518 and E520.

The protein belongs to the CTP synthase family. As to quaternary structure, homotetramer.

The catalysed reaction is UTP + L-glutamine + ATP + H2O = CTP + L-glutamate + ADP + phosphate + 2 H(+). It catalyses the reaction L-glutamine + H2O = L-glutamate + NH4(+). The enzyme catalyses UTP + NH4(+) + ATP = CTP + ADP + phosphate + 2 H(+). It functions in the pathway pyrimidine metabolism; CTP biosynthesis via de novo pathway; CTP from UDP: step 2/2. With respect to regulation, allosterically activated by GTP, when glutamine is the substrate; GTP has no effect on the reaction when ammonia is the substrate. The allosteric effector GTP functions by stabilizing the protein conformation that binds the tetrahedral intermediate(s) formed during glutamine hydrolysis. Inhibited by the product CTP, via allosteric rather than competitive inhibition. Catalyzes the ATP-dependent amination of UTP to CTP with either L-glutamine or ammonia as the source of nitrogen. Regulates intracellular CTP levels through interactions with the four ribonucleotide triphosphates. In Bordetella petrii (strain ATCC BAA-461 / DSM 12804 / CCUG 43448), this protein is CTP synthase.